We begin with the raw amino-acid sequence, 187 residues long: UPF0301 protein VV2869 (187 aa).

This sequence belongs to the UPF0301 (AlgH) family.

The protein is UPF0301 protein VV2869 of Vibrio vulnificus (strain YJ016).